The chain runs to 621 residues: Chaperone protein HtpG (621 aa).

The interval 1-341 is a; substrate-binding; it reads MSNQEYTFQT…SEDLPLNVSR (341 aa). Residues 342-547 form a b region; the sequence is EILQQNKILA…GDEQNAMMAN (206 aa). A c region spans residues 548–621; it reads LMRQMGQNMP…RLNSVLLKAL (74 aa).

This sequence belongs to the heat shock protein 90 family. In terms of assembly, homodimer.

The protein resides in the cytoplasm. Its function is as follows. Molecular chaperone. Has ATPase activity. The chain is Chaperone protein HtpG from Helicobacter acinonychis (strain Sheeba).